The chain runs to 368 residues: MSDNTVKIKKQTIDPTLTLEDVKKQLIEKGKKEGHLSHEEIAEKLQNFDIDSDQMDDFFDQLNDNDISLVNEKDSSDTDEKLNPSDLSAPPGVKINDPVRMYLKEIGRVNLLSAQEEIELAKRIEQGDEVAKSRLAEANLRLVVSIAKRYVGRGMLFLDLIQEGNMGLIKAVEKFDFNKGFKFSTYATWWIRQAITRAIADQARTIRIPVHMVETINKLIRVQRQLLQDLGRDPAPEEIGEEMDLPAEKVREVLKIAQEPVSLETPIGEEDDSHLGDFIEDQEAQSPSDHAAYELLKEQLEDVLDTLTDREENVLRLRFGLDDGRTRTLEEVGKVFGVTRERIRQIEAKALRKLRHPSRSKRLKDFMD.

Positions 69-90 are disordered; that stretch reads LVNEKDSSDTDEKLNPSDLSAP. Residues 71–83 show a composition bias toward basic and acidic residues; sequence NEKDSSDTDEKLN. The interval 135–205 is sigma-70 factor domain-2; it reads LAEANLRLVV…TRAIADQART (71 aa). Positions 159–162 match the Interaction with polymerase core subunit RpoC motif; it reads DLIQ. Residues 214 to 290 form a sigma-70 factor domain-3 region; sequence ETINKLIRVQ…DQEAQSPSDH (77 aa). Positions 303–356 are sigma-70 factor domain-4; the sequence is VLDTLTDREENVLRLRFGLDDGRTRTLEEVGKVFGVTRERIRQIEAKALRKLRH. The segment at residues 329–348 is a DNA-binding region (H-T-H motif); it reads LEEVGKVFGVTRERIRQIEA.

This sequence belongs to the sigma-70 factor family. RpoD/SigA subfamily. As to quaternary structure, interacts transiently with the RNA polymerase catalytic core.

The protein resides in the cytoplasm. Functionally, sigma factors are initiation factors that promote the attachment of RNA polymerase to specific initiation sites and are then released. This sigma factor is the primary sigma factor during exponential growth. The polypeptide is RNA polymerase sigma factor SigA (Staphylococcus aureus (strain N315)).